Reading from the N-terminus, the 447-residue chain is Alpha-1,6-mannosyl-glycoprotein 2-beta-N-acetylglucosaminyltransferase (447 aa).

Residues 1–9 are Cytoplasmic-facing; that stretch reads MRFRIYKRK. The chain crosses the membrane as a helical; Signal-anchor for type II membrane protein span at residues 10–29; the sequence is VLILTLVVAACGFVLWSSNG. Over 30 to 447 the chain is Lumenal; it reads RQRKNEALAP…ELCKSYRRLQ (418 aa). 2 N-linked (GlcNAc...) asparagine glycosylation sites follow: N69 and N86. Substrate contacts are provided by residues 123–127 and D154; that span reads QVHNR. Residues C196 and C210 are joined by a disulfide bond. 229 to 233 is a binding site for substrate; sequence QTKHH. Position 261 (D261) interacts with Mn(2+). C283 and C286 form a disulfide bridge. R298 provides a ligand contact to substrate. 3 cysteine pairs are disulfide-bonded: C334–C357, C339–C440, and C378–C386. H374 contacts Mn(2+).

Belongs to the glycosyltransferase 16 (GT16) protein family. As to quaternary structure, homodimer. The cofactor is Mn(2+).

The protein resides in the golgi apparatus membrane. The enzyme catalyses an N(4)-{beta-D-GlcNAc-(1-&gt;2)-alpha-D-Man-(1-&gt;3)-[alpha-D-Man-(1-&gt;6)]-beta-D-Man-(1-&gt;4)-beta-D-GlcNAc-(1-&gt;4)-beta-D-GlcNAc}-L-asparaginyl-[protein] + UDP-N-acetyl-alpha-D-glucosamine = N(4)-{beta-D-GlcNAc-(1-&gt;2)-alpha-D-Man-(1-&gt;3)-[beta-D-GlcNAc-(1-&gt;2)-alpha-D-Man-(1-&gt;6)]-beta-D-Man-(1-&gt;4)-beta-D-GlcNAc-(1-&gt;4)-beta-D-GlcNAc}-L-asparaginyl-[protein] + UDP + H(+). It functions in the pathway protein modification; protein glycosylation. In terms of biological role, plays an essential role in protein N-glycosylation. Catalyzes the transfer of N-acetylglucosamine (GlcNAc) onto the free terminal mannose moiety in the core structure of the nascent N-linked glycan chain, giving rise to the second branch in complex glycans. In Homo sapiens (Human), this protein is Alpha-1,6-mannosyl-glycoprotein 2-beta-N-acetylglucosaminyltransferase (MGAT2).